We begin with the raw amino-acid sequence, 123 residues long: Ribonuclease P protein component 2 (123 aa).

This sequence belongs to the eukaryotic/archaeal RNase P protein component 2 family. As to quaternary structure, consists of a catalytic RNA component and at least 4 protein subunits.

The enzyme catalyses Endonucleolytic cleavage of RNA, removing 5'-extranucleotides from tRNA precursor.. Part of ribonuclease P, a protein complex that generates mature tRNA molecules by cleaving their 5'-ends. The chain is Ribonuclease P protein component 2 from Aeropyrum pernix (strain ATCC 700893 / DSM 11879 / JCM 9820 / NBRC 100138 / K1).